Consider the following 235-residue polypeptide: Large ribosomal subunit protein uL1 (235 aa).

This sequence belongs to the universal ribosomal protein uL1 family. As to quaternary structure, part of the 50S ribosomal subunit.

Its function is as follows. Binds directly to 23S rRNA. The L1 stalk is quite mobile in the ribosome, and is involved in E site tRNA release. Functionally, protein L1 is also a translational repressor protein, it controls the translation of the L11 operon by binding to its mRNA. The polypeptide is Large ribosomal subunit protein uL1 (Mycobacterium marinum (strain ATCC BAA-535 / M)).